A 214-amino-acid polypeptide reads, in one-letter code: Adenylate kinase (214 aa).

Residue 12–17 (GVGKGT) coordinates ATP. The interval 32–61 (STGNIFRSQIASNSELGIKLKEIVESGGYV) is NMP. AMP is bound by residues Thr-33, Arg-38, 59-61 (GYV), 88-91 (GYPR), and Gln-95. Residues 126–163 (GRRICPSCNAQYHIYFKKSKLDTKCEIDQSELIQRKDD) are LID. Arg-127 is an ATP binding site. Cys-130, Cys-133, Cys-150, and Asp-153 together coordinate Zn(2+). AMP-binding residues include Arg-160 and Arg-171. Position 199 (Lys-199) interacts with ATP.

Belongs to the adenylate kinase family. In terms of assembly, monomer.

The protein resides in the cytoplasm. It catalyses the reaction AMP + ATP = 2 ADP. It participates in purine metabolism; AMP biosynthesis via salvage pathway; AMP from ADP: step 1/1. Catalyzes the reversible transfer of the terminal phosphate group between ATP and AMP. Plays an important role in cellular energy homeostasis and in adenine nucleotide metabolism. This Mycoplasmopsis pulmonis (strain UAB CTIP) (Mycoplasma pulmonis) protein is Adenylate kinase.